The primary structure comprises 448 residues: Phosphoglucosamine mutase (448 aa).

Serine 104 acts as the Phosphoserine intermediate in catalysis. Mg(2+) is bound by residues serine 104, aspartate 243, aspartate 245, and aspartate 247. Residue serine 104 is modified to Phosphoserine.

It belongs to the phosphohexose mutase family. It depends on Mg(2+) as a cofactor. Activated by phosphorylation.

It carries out the reaction alpha-D-glucosamine 1-phosphate = D-glucosamine 6-phosphate. In terms of biological role, catalyzes the conversion of glucosamine-6-phosphate to glucosamine-1-phosphate. This chain is Phosphoglucosamine mutase, found in Xylella fastidiosa (strain 9a5c).